Here is a 631-residue protein sequence, read N- to C-terminus: Phosphomethylpyrimidine synthase (631 aa).

Substrate-binding positions include N239, M268, Y297, H333, 353–355 (SRG), 394–397 (DGLR), and E433. H437 serves as a coordination point for Zn(2+). Position 460 (Y460) interacts with substrate. Residue H501 coordinates Zn(2+). The [4Fe-4S] cluster site is built by C581, C584, and C589.

It belongs to the ThiC family. As to quaternary structure, homodimer. [4Fe-4S] cluster is required as a cofactor.

The catalysed reaction is 5-amino-1-(5-phospho-beta-D-ribosyl)imidazole + S-adenosyl-L-methionine = 4-amino-2-methyl-5-(phosphooxymethyl)pyrimidine + CO + 5'-deoxyadenosine + formate + L-methionine + 3 H(+). Its pathway is cofactor biosynthesis; thiamine diphosphate biosynthesis. In terms of biological role, catalyzes the synthesis of the hydroxymethylpyrimidine phosphate (HMP-P) moiety of thiamine from aminoimidazole ribotide (AIR) in a radical S-adenosyl-L-methionine (SAM)-dependent reaction. This is Phosphomethylpyrimidine synthase from Shigella sonnei (strain Ss046).